Reading from the N-terminus, the 195-residue chain is Probable prefoldin subunit 3 (195 aa).

This sequence belongs to the prefoldin subunit alpha family. Heterohexamer of two PFD-alpha type and four PFD-beta type subunits.

In terms of biological role, binds specifically to cytosolic chaperonin (c-CPN) and transfers target proteins to it. Binds to nascent polypeptide chain and promotes folding in an environment in which there are many competing pathways for nonnative proteins. In Dictyostelium discoideum (Social amoeba), this protein is Probable prefoldin subunit 3 (pfdn3).